A 316-amino-acid polypeptide reads, in one-letter code: Probable peptidyl-tRNA hydrolase 2 (316 aa).

A disordered region spans residues 1–127 (MSENIPDIDP…SHPVDPQEPN (127 aa)). Over residues 44–53 (PTPSSVTVDN) the composition is skewed to polar residues. The segment covering 75–89 (IPEVPIPSSAISISS) has biased composition (low complexity). Residues 128 to 169 (EVNNEYLAHLLDLGFDEYTAVLALKRTNSAGVEQAVAWIVER) enclose the UBA domain. Residues 170–193 (SNESDFDEDSSSSENEADEEMGAV) are disordered. The span at 173 to 190 (SDFDEDSSSSENEADEEM) shows a compositional bias: acidic residues.

It belongs to the PTH2 family.

It catalyses the reaction an N-acyl-L-alpha-aminoacyl-tRNA + H2O = an N-acyl-L-amino acid + a tRNA + H(+). Functionally, the natural substrate for this enzyme may be peptidyl-tRNAs which drop off the ribosome during protein synthesis. This is Probable peptidyl-tRNA hydrolase 2 from Caenorhabditis elegans.